The chain runs to 488 residues: UDP-N-acetylmuramate--L-alanine ligase (488 aa).

An ATP-binding site is contributed by 126-132 (GTHGKTT).

This sequence belongs to the MurCDEF family.

Its subcellular location is the cytoplasm. It catalyses the reaction UDP-N-acetyl-alpha-D-muramate + L-alanine + ATP = UDP-N-acetyl-alpha-D-muramoyl-L-alanine + ADP + phosphate + H(+). It functions in the pathway cell wall biogenesis; peptidoglycan biosynthesis. Its function is as follows. Cell wall formation. The protein is UDP-N-acetylmuramate--L-alanine ligase of Cronobacter sakazakii (strain ATCC BAA-894) (Enterobacter sakazakii).